The primary structure comprises 263 residues: Small ribosomal subunit protein uS2 (263 aa).

S2 carries the N-acetylserine modification. Positions 213–223 are enriched in low complexity; that stretch reads NAAEEARAGAT. The disordered stretch occupies residues 213 to 245; sequence NAAEEARAGATEETEEVVAEAETEWNTETNVED. Residues 224-245 are compositionally biased toward acidic residues; that stretch reads EETEEVVAEAETEWNTETNVED.

Belongs to the universal ribosomal protein uS2 family. As to quaternary structure, component of the small ribosomal subunit. Mature ribosomes consist of a small (40S) and a large (60S) subunit. The 40S subunit contains about 33 different proteins and 1 molecule of RNA (18S). The 60S subunit contains about 49 different proteins and 3 molecules of RNA (25S, 5.8S and 5S). Interacts with RPS21.

The protein localises to the cytoplasm. Required for the assembly and/or stability of the 40S ribosomal subunit. Required for the processing of the 20S rRNA-precursor to mature 18S rRNA in a late step of the maturation of 40S ribosomal subunits. The sequence is that of Small ribosomal subunit protein uS2 from Clavispora lusitaniae (strain ATCC 42720) (Yeast).